The chain runs to 287 residues: tRNA pseudouridine synthase B (287 aa).

Aspartate 38 acts as the Nucleophile in catalysis.

It belongs to the pseudouridine synthase TruB family. Type 1 subfamily.

The enzyme catalyses uridine(55) in tRNA = pseudouridine(55) in tRNA. Responsible for synthesis of pseudouridine from uracil-55 in the psi GC loop of transfer RNAs. This is tRNA pseudouridine synthase B from Fusobacterium nucleatum subsp. nucleatum (strain ATCC 25586 / DSM 15643 / BCRC 10681 / CIP 101130 / JCM 8532 / KCTC 2640 / LMG 13131 / VPI 4355).